The chain runs to 500 residues: Probable malate:quinone oxidoreductase (500 aa).

The protein belongs to the MQO family. The cofactor is FAD.

The catalysed reaction is (S)-malate + a quinone = a quinol + oxaloacetate. It participates in carbohydrate metabolism; tricarboxylic acid cycle; oxaloacetate from (S)-malate (quinone route): step 1/1. The chain is Probable malate:quinone oxidoreductase from Bacillus thuringiensis (strain Al Hakam).